A 660-amino-acid chain; its full sequence is Acetyl-coenzyme A synthetase (660 aa).

Residues 197–200 (RGGK) and threonine 317 each bind CoA. Residues 397 to 399 (GEP), 421 to 426 (DTFWQT), aspartate 512, and arginine 528 each bind ATP. Serine 536 lines the CoA pocket. Arginine 539 contributes to the ATP binding site. Residues valine 550 and valine 555 each contribute to the Mg(2+) site. An N6-acetyllysine modification is found at lysine 625.

This sequence belongs to the ATP-dependent AMP-binding enzyme family. It depends on Mg(2+) as a cofactor. In terms of processing, acetylated. Deacetylation by the SIR2-homolog deacetylase activates the enzyme.

It catalyses the reaction acetate + ATP + CoA = acetyl-CoA + AMP + diphosphate. Functionally, catalyzes the conversion of acetate into acetyl-CoA (AcCoA), an essential intermediate at the junction of anabolic and catabolic pathways. AcsA undergoes a two-step reaction. In the first half reaction, AcsA combines acetate with ATP to form acetyl-adenylate (AcAMP) intermediate. In the second half reaction, it can then transfer the acetyl group from AcAMP to the sulfhydryl group of CoA, forming the product AcCoA. The protein is Acetyl-coenzyme A synthetase of Cupriavidus metallidurans (strain ATCC 43123 / DSM 2839 / NBRC 102507 / CH34) (Ralstonia metallidurans).